The chain runs to 108 residues: Protein YcgL (108 aa).

A YcgL domain is found at Met12–Leu96.

In Shigella sonnei (strain Ss046), this protein is Protein YcgL.